The primary structure comprises 803 residues: Ubiquitin carboxyl-terminal hydrolase 45 (803 aa).

Residues 1-34 are disordered; that stretch reads MRLKDPFSLKTADMTKRSNKPKKPRDEDSSDEVG. The UBP-type zinc finger occupies 36–153; sequence LTCQHVSRAV…QTLDFLQKQS (118 aa). Zn(2+) contacts are provided by C38, H40, C62, C65, C85, C88, C93, H100, H104, H113, C126, and C129. The USP domain maps to 192–802; sequence KGINNLGNTC…QAYLLFYEEL (611 aa). C201 functions as the Nucleophile in the catalytic mechanism. Positions 394–554 are disordered; that stretch reads PTNPARLGKS…LPSIRPQQGG (161 aa). Positions 403–417 are enriched in basic and acidic residues; it reads SGREQDSLTSHDDSL. Polar residues-rich tracts occupy residues 419–440 and 469–480; these read AHSQANRNSRRLSGQKLQSRHS and SYRTDTMGSQSD. The segment covering 502–531 has biased composition (low complexity); that stretch reads SEWSPRIPSVSSHSSTSDKTSITTTLSTTT. A compositionally biased stretch (polar residues) spans 532–545; that stretch reads HNPSLKSNPSSTPL. H739 acts as the Proton acceptor in catalysis.

The protein belongs to the peptidase C19 family. As to expression, retina.

The protein localises to the photoreceptor inner segment. The protein resides in the cytoplasm. It localises to the nucleus. It catalyses the reaction Thiol-dependent hydrolysis of ester, thioester, amide, peptide and isopeptide bonds formed by the C-terminal Gly of ubiquitin (a 76-residue protein attached to proteins as an intracellular targeting signal).. Catalyzes the deubiquitination of SPDL1. Plays a role in the repair of UV-induced DNA damage via deubiquitination of ERCC1, promoting its recruitment to DNA damage sites. May be involved in the maintenance of photoreceptor function. May play a role in normal retinal development. The protein is Ubiquitin carboxyl-terminal hydrolase 45 of Danio rerio (Zebrafish).